A 135-amino-acid polypeptide reads, in one-letter code: Transcription antitermination protein NusB (135 aa).

The protein belongs to the NusB family.

Functionally, involved in transcription antitermination. Required for transcription of ribosomal RNA (rRNA) genes. Binds specifically to the boxA antiterminator sequence of the ribosomal RNA (rrn) operons. In Bdellovibrio bacteriovorus (strain ATCC 15356 / DSM 50701 / NCIMB 9529 / HD100), this protein is Transcription antitermination protein NusB.